A 186-amino-acid polypeptide reads, in one-letter code: MSEELLQKFLTSIEQEDGIAEIGKKKKNKSAARRDNVKTILHAASKGQVQLSAEESYIVQKPSTSKGSDYIDDRLASQGFSLIDQARSFKPKDLKKRNLKYMKFQEGRRIDKKKGRILVQAHMQTKQDLKSLRKEKKAIIGVKEPRRLLPGQKKKQKDKSVFSDADFAQVAHVAKRINSMADHSFL.

This is an uncharacterized protein from Caenorhabditis elegans.